The following is a 227-amino-acid chain: MSRGAAMIEVTNLCKSFVSGTRRVDVLSHVDMKIDAGERVAVVGASGAGKTSLMHILGGLDRPTSGDVLYDKQDIFSLKGAGLDDFRNRTLGFVFQFHQLLPEFTALENVMLPALIARWSRAKAKSAARELLTEVGLESRLSHKPGELSGGEQQRVAIARALVGSPRVLFADEPTGNLDSNTSESIYRLLSRLHETRGLTLFIVTHDARLAAGLDRVVHMADGRITG.

The ABC transporter domain maps to 8-226 (IEVTNLCKSF…VVHMADGRIT (219 aa)). ATP is bound at residue 44–51 (GASGAGKT).

It belongs to the ABC transporter superfamily. Lipoprotein translocase (TC 3.A.1.125) family. In terms of assembly, the complex is composed of two ATP-binding proteins (LolD) and two transmembrane proteins (LolC and LolE).

Its subcellular location is the cell inner membrane. Functionally, part of the ABC transporter complex LolCDE involved in the translocation of mature outer membrane-directed lipoproteins, from the inner membrane to the periplasmic chaperone, LolA. Responsible for the formation of the LolA-lipoprotein complex in an ATP-dependent manner. The sequence is that of Lipoprotein-releasing system ATP-binding protein LolD from Syntrophotalea carbinolica (strain DSM 2380 / NBRC 103641 / GraBd1) (Pelobacter carbinolicus).